The primary structure comprises 258 residues: L-aminoadipate-semialdehyde dehydrogenase-phosphopantetheinyl transferase (258 aa).

This sequence belongs to the P-Pant transferase superfamily. AcpS family.

The catalysed reaction is apo-[ACP] + CoA = holo-[ACP] + adenosine 3',5'-bisphosphate + H(+). Its function is as follows. Catalyzes the transfer of a 4'-phosphopantetheine moiety from coenzyme A to a serine residue of acceptor proteins, such as alpha-aminoadipate reductase. Necessary for alpha-aminoadipate reductase activity. The protein is L-aminoadipate-semialdehyde dehydrogenase-phosphopantetheinyl transferase (LYS5) of Candida glabrata (strain ATCC 2001 / BCRC 20586 / JCM 3761 / NBRC 0622 / NRRL Y-65 / CBS 138) (Yeast).